The sequence spans 129 residues: Class I hydrophobin 11 (129 aa).

The signal sequence occupies residues 1–19 (MRLTPLLAALALPLLTVLA). 4 disulfides stabilise this stretch: Cys-48/Cys-106, Cys-55/Cys-100, Cys-56/Cys-89, and Cys-107/Cys-122.

This sequence belongs to the fungal hydrophobin family. As to quaternary structure, self-assembles to form functional amyloid fibrils called rodlets. Self-assembly into fibrillar rodlets occurs spontaneously at hydrophobic:hydrophilic interfaces and the rodlets further associate laterally to form amphipathic monolayers.

Its subcellular location is the secreted. The protein localises to the cell wall. Aerial growth, conidiation, and dispersal of filamentous fungi in the environment rely upon a capability of their secreting small amphipathic proteins called hydrophobins (HPBs) with low sequence identity. Class I can self-assemble into an outermost layer of rodlet bundles on aerial cell surfaces, conferring cellular hydrophobicity that supports fungal growth, development and dispersal; whereas Class II form highly ordered films at water-air interfaces through intermolecular interactions but contribute nothing to the rodlet structure. The polypeptide is Class I hydrophobin 11 (Pleurotus ostreatus (strain PC15) (Oyster mushroom)).